Here is a 359-residue protein sequence, read N- to C-terminus: tRNA-specific 2-thiouridylase MnmA (359 aa).

Residues 7–14 and Met33 contribute to the ATP site; that span reads AMSGGVDS. Residue Cys101 is the Nucleophile of the active site. Cys101 and Cys198 are oxidised to a cystine. Residue Gly125 coordinates ATP. Positions 148-150 are interaction with tRNA; the sequence is KDQ. The Cysteine persulfide intermediate role is filled by Cys198.

This sequence belongs to the MnmA/TRMU family.

It is found in the cytoplasm. The catalysed reaction is S-sulfanyl-L-cysteinyl-[protein] + uridine(34) in tRNA + AH2 + ATP = 2-thiouridine(34) in tRNA + L-cysteinyl-[protein] + A + AMP + diphosphate + H(+). Catalyzes the 2-thiolation of uridine at the wobble position (U34) of tRNA, leading to the formation of s(2)U34. This Chloroflexus aurantiacus (strain ATCC 29366 / DSM 635 / J-10-fl) protein is tRNA-specific 2-thiouridylase MnmA.